Here is a 287-residue protein sequence, read N- to C-terminus: Probable F-box protein At5g04010 (287 aa).

The 52-residue stretch at 50-101 (PSPPSWEILCLVGPYMDPESLAVASCVSTTWSKCFSSEDLWKSLPATRHSIF) folds into the F-box; degenerate domain.

This Arabidopsis thaliana (Mouse-ear cress) protein is Probable F-box protein At5g04010 (NSFBx).